We begin with the raw amino-acid sequence, 826 residues long: Copper-transporting ATPase 1 (826 aa).

2 HMA domains span residues 15–80 (APTD…YEPK) and 82–147 (IIQE…YDVR). Positions 26, 29, 93, and 96 each coordinate Cu cation. 6 consecutive transmembrane segments (helical) span residues 172–192 (LVILSAVLTLPLFLVEMGSHF), 209–229 (NLYIQFALATAVLFGPGLRFF), 246–266 (LVVLGTTAAWGYSVVATFASG), 270–290 (SGTANVYYEAAAVIVTLILLG), 429–449 (AWFVPAVILVAVLTFAAWYVF), and 457–477 (FALVNAVAVLIIACPCAMGLA). The 4-aspartylphosphate intermediate role is filled by aspartate 514. Positions 713 and 717 each coordinate Mg(2+). The next 2 membrane-spanning stretches (helical) occupy residues 772-792 (FWAFAYNVSLVPVAAGVLYPL) and 795-815 (TLLSPILAAAAMAMSSVFVLG).

This sequence belongs to the cation transport ATPase (P-type) (TC 3.A.3) family. Type IB subfamily.

Its subcellular location is the cell membrane. It carries out the reaction Cu(2+)(in) + ATP + H2O = Cu(2+)(out) + ADP + phosphate + H(+). Its function is as follows. Involved in copper transport. This Rhizobium meliloti (strain 1021) (Ensifer meliloti) protein is Copper-transporting ATPase 1 (actP1).